The primary structure comprises 205 residues: Probable transcription factor Ken (205 aa).

C2H2-type zinc fingers lie at residues 106–128 (YRCEYCGKQFGMSWNLKTHLRVH), 134–157 (FACRLCVAMFKQKAHLLKHLCSVH), and 173–196 (YSCCFCSMCFESVQELVRHLSGHH).

The protein localises to the nucleus. Functionally, probable transcription factor, which is required for terminalia development. The chain is Probable transcription factor Ken (ken) from Drosophila yakuba (Fruit fly).